A 196-amino-acid polypeptide reads, in one-letter code: Glycerol-3-phosphate acyltransferase (196 aa).

6 helical membrane-spanning segments follow: residues 5–25 (VYLLIVFAYLLGSVSSAIIFC), 53–73 (FSALGVLLFDILKGGLPVLLA), 80–100 (PSEIGLIALAACLGHIFPLFF), 107–127 (GVATAFGALLSISFAASAAGL), 130–150 (WLIVFLLFGYSSLSAVITALI), and 153–173 (FYIWWFLPEFTFPVALVCCLL).

Belongs to the PlsY family. As to quaternary structure, probably interacts with PlsX.

The protein resides in the cell inner membrane. The enzyme catalyses an acyl phosphate + sn-glycerol 3-phosphate = a 1-acyl-sn-glycero-3-phosphate + phosphate. Its pathway is lipid metabolism; phospholipid metabolism. In terms of biological role, catalyzes the transfer of an acyl group from acyl-phosphate (acyl-PO(4)) to glycerol-3-phosphate (G3P) to form lysophosphatidic acid (LPA). This enzyme utilizes acyl-phosphate as fatty acyl donor, but not acyl-CoA or acyl-ACP. In Actinobacillus pleuropneumoniae serotype 7 (strain AP76), this protein is Glycerol-3-phosphate acyltransferase.